Here is a 261-residue protein sequence, read N- to C-terminus: tRNA pseudouridine synthase A (261 aa).

The active-site Nucleophile is aspartate 51. Tyrosine 109 serves as a coordination point for substrate.

The protein belongs to the tRNA pseudouridine synthase TruA family. As to quaternary structure, homodimer.

It carries out the reaction uridine(38/39/40) in tRNA = pseudouridine(38/39/40) in tRNA. In terms of biological role, formation of pseudouridine at positions 38, 39 and 40 in the anticodon stem and loop of transfer RNAs. This is tRNA pseudouridine synthase A from Shewanella pealeana (strain ATCC 700345 / ANG-SQ1).